The primary structure comprises 231 residues: Potassium/proton antiporter CemA (231 aa).

Transmembrane regions (helical) follow at residues 7 to 27 (FIPLLCLTSIVFLPWCISFTF), 104 to 124 (IHTILHFCTNIICFLILSVYS), 154 to 174 (ILFLIEFCVGYHSTGGWELMI), and 189 to 209 (IISFLVSILPAILDTIFKYWI).

Belongs to the CemA family.

The protein localises to the plastid. It is found in the chloroplast inner membrane. The catalysed reaction is K(+)(in) + H(+)(out) = K(+)(out) + H(+)(in). Its function is as follows. Contributes to K(+)/H(+) antiport activity by supporting proton efflux to control proton extrusion and homeostasis in chloroplasts in a light-dependent manner to modulate photosynthesis. Prevents excessive induction of non-photochemical quenching (NPQ) under continuous-light conditions. Indirectly promotes efficient inorganic carbon uptake into chloroplasts. The polypeptide is Potassium/proton antiporter CemA (Pisum sativum (Garden pea)).